Reading from the N-terminus, the 332-residue chain is Ribosomal RNA small subunit methyltransferase C (332 aa).

Belongs to the methyltransferase superfamily. RsmC family. Monomer.

The protein localises to the cytoplasm. The enzyme catalyses guanosine(1207) in 16S rRNA + S-adenosyl-L-methionine = N(2)-methylguanosine(1207) in 16S rRNA + S-adenosyl-L-homocysteine + H(+). In terms of biological role, specifically methylates the guanine in position 1207 of 16S rRNA in the 30S particle. The chain is Ribosomal RNA small subunit methyltransferase C from Pseudomonas putida (strain ATCC 700007 / DSM 6899 / JCM 31910 / BCRC 17059 / LMG 24140 / F1).